A 462-amino-acid chain; its full sequence is A-type ATP synthase subunit B (462 aa).

Belongs to the ATPase alpha/beta chains family. Has multiple subunits with at least A(3), B(3), C, D, E, F, H, I and proteolipid K(x).

The protein localises to the cell membrane. In terms of biological role, component of the A-type ATP synthase that produces ATP from ADP in the presence of a proton gradient across the membrane. The B chain is a regulatory subunit. The chain is A-type ATP synthase subunit B from Methanococcus maripaludis (strain DSM 14266 / JCM 13030 / NBRC 101832 / S2 / LL).